We begin with the raw amino-acid sequence, 873 residues long: Nitrate reductase [NADPH] (873 aa).

The segment at 30 to 61 (TELDTADIPLPPPSKEPTEVLSLDKTTPDSHV) is disordered. Cys150 is a binding site for Mo-molybdopterin. A Cytochrome b5 heme-binding domain is found at 512-587 (TRIIDLEEFK…MPDYHIGTLD (76 aa)). Heme contacts are provided by His547 and His570. An FAD-binding FR-type domain is found at 616-729 (KAWTKATLTK…KGPTGRFEYL (114 aa)). Residues 672–675 (RSYT), 689–693 (LIKIY), 703–705 (KMT), and Thr756 each bind FAD. 843 to 852 (MVLVCGPEAM) lines the NADP(+) pocket.

Belongs to the nitrate reductase family. As to quaternary structure, homodimer. Requires FAD as cofactor. Heme is required as a cofactor. It depends on Mo-molybdopterin as a cofactor.

The enzyme catalyses nitrite + NADP(+) + H2O = nitrate + NADPH + H(+). Its function is as follows. Nitrate reductase is a key enzyme involved in the first step of nitrate assimilation in plants, fungi and bacteria. The sequence is that of Nitrate reductase [NADPH] (niaD) from Emericella nidulans (strain FGSC A4 / ATCC 38163 / CBS 112.46 / NRRL 194 / M139) (Aspergillus nidulans).